A 129-amino-acid polypeptide reads, in one-letter code: Protein yippee-like (129 aa).

One can recognise a Yippee domain in the interval 12–109; sequence KIYSCKHCGT…LERFKITGPD (98 aa). Positions 16, 19, 72, and 75 each coordinate Zn(2+).

This sequence belongs to the yippee family.

This chain is Protein yippee-like, found in Solanum tuberosum (Potato).